Here is a 219-residue protein sequence, read N- to C-terminus: uncharacterized protein (219 aa).

2 helical membrane-spanning segments follow: residues 8–28 (MILFLLVGLAVVLSGCATLSV) and 194–214 (GIPGFEAALAIVGLLAAGLLF).

It is found in the cell membrane. This is an uncharacterized protein from Archaeoglobus fulgidus (strain ATCC 49558 / DSM 4304 / JCM 9628 / NBRC 100126 / VC-16).